Consider the following 447-residue polypeptide: N-succinylarginine dihydrolase (447 aa).

Residues 19–28, Asn-110, and 137–138 contribute to the substrate site; these read AGLSFGNEAS and HR. Glu-174 is a catalytic residue. Arg-212 lines the substrate pocket. Residue His-248 is part of the active site. 2 residues coordinate substrate: Asp-250 and Asn-359. Cys-365 acts as the Nucleophile in catalysis.

This sequence belongs to the succinylarginine dihydrolase family. Homodimer.

It carries out the reaction N(2)-succinyl-L-arginine + 2 H2O + 2 H(+) = N(2)-succinyl-L-ornithine + 2 NH4(+) + CO2. The protein operates within amino-acid degradation; L-arginine degradation via AST pathway; L-glutamate and succinate from L-arginine: step 2/5. In terms of biological role, catalyzes the hydrolysis of N(2)-succinylarginine into N(2)-succinylornithine, ammonia and CO(2). This is N-succinylarginine dihydrolase from Escherichia coli (strain K12 / MC4100 / BW2952).